The chain runs to 1097 residues: DNA-directed RNA polymerase subunit beta (1097 aa).

The disordered stretch occupies residues 1072–1097 (QDVNPRRSTPSRPTYESLGVADYDED).

It belongs to the RNA polymerase beta chain family. In terms of assembly, in cyanobacteria the RNAP catalytic core is composed of 2 alpha, 1 beta, 1 beta', 1 gamma and 1 omega subunit. When a sigma factor is associated with the core the holoenzyme is formed, which can initiate transcription.

It carries out the reaction RNA(n) + a ribonucleoside 5'-triphosphate = RNA(n+1) + diphosphate. DNA-dependent RNA polymerase catalyzes the transcription of DNA into RNA using the four ribonucleoside triphosphates as substrates. The chain is DNA-directed RNA polymerase subunit beta from Parasynechococcus marenigrum (strain WH8102).